Here is a 644-residue protein sequence, read N- to C-terminus: DNA gyrase subunit B (644 aa).

In terms of domain architecture, Toprim spans 429 to 543; that stretch reads CEIFLVEGDS…AGYVYIAQPP (115 aa). The Mg(2+) site is built by glutamate 435, aspartate 508, and aspartate 510.

The protein belongs to the type II topoisomerase GyrB family. Heterotetramer, composed of two GyrA and two GyrB chains. In the heterotetramer, GyrA contains the active site tyrosine that forms a transient covalent intermediate with DNA, while GyrB binds cofactors and catalyzes ATP hydrolysis. Requires Mg(2+) as cofactor. It depends on Mn(2+) as a cofactor. The cofactor is Ca(2+).

Its subcellular location is the cytoplasm. It carries out the reaction ATP-dependent breakage, passage and rejoining of double-stranded DNA.. Functionally, a type II topoisomerase that negatively supercoils closed circular double-stranded (ds) DNA in an ATP-dependent manner to modulate DNA topology and maintain chromosomes in an underwound state. Negative supercoiling favors strand separation, and DNA replication, transcription, recombination and repair, all of which involve strand separation. Also able to catalyze the interconversion of other topological isomers of dsDNA rings, including catenanes and knotted rings. Type II topoisomerases break and join 2 DNA strands simultaneously in an ATP-dependent manner. The protein is DNA gyrase subunit B of Staphylococcus aureus (strain Mu50 / ATCC 700699).